The following is an 807-amino-acid chain: Maternal DNA replication licensing factor mcm3 (807 aa).

Positions 295–502 (IFEHLSKSLA…NDQEIADHVL (208 aa)) constitute an MCM domain. Position 345–352 (345–352 (GDPSVAKS)) interacts with ATP. The Arginine finger motif lies at 477–480 (SRFD). A compositionally biased stretch (basic and acidic residues) spans 664–673 (KTDKDLHDEN). The tract at residues 664–741 (KTDKDLHDEN…QDGKRSLSQN (78 aa)) is disordered. The segment covering 707–723 (FSEQDSSLNENLSQSLR) has biased composition (polar residues). The span at 727–741 (KKAESQDGKRSLSQN) shows a compositional bias: basic and acidic residues.

It belongs to the MCM family. Component of the mcm2-7 complex (RLF-M). The complex forms a toroidal hexameric ring with the proposed subunit order mcm2-mcm6-mcm4-mcm7-mcm3-mcm5. The heterodimer of mmcm3/mcm5 interacts with mcm4, mmcm6, mcm7 and weakly with mcm2. Interacts with mcm7, though this interaction may not be direct, and remains in a complex with mcm7 throughout the cell cycle. Component of the CMG helicase complex, composed of the mcm2-7 complex, the GINS complex and cdc45.

It is found in the nucleus. The protein resides in the chromosome. The enzyme catalyses ATP + H2O = ADP + phosphate + H(+). Acts as a component of the mcm2-7 complex (mcm complex) which is the putative replicative helicase essential for 'once per cell cycle' DNA replication initiation and elongation in eukaryotic cells. The active ATPase sites in the mcm2-7 ring are formed through the interaction surfaces of two neighboring subunits such that a critical structure of a conserved arginine finger motif is provided in trans relative to the ATP-binding site of the Walker A box of the adjacent subunit. The six ATPase active sites, however, are likely to contribute differentially to the complex helicase activity. The existence of maternal and zygotic forms of mcm3 and mcm6 suggests that specific forms of mcm2-7 complexes may be used during different stages of development. The polypeptide is Maternal DNA replication licensing factor mcm3 (mmcm3) (Xenopus laevis (African clawed frog)).